A 448-amino-acid chain; its full sequence is Glutamyl-tRNA(Gln) amidotransferase subunit D (448 aa).

An Asparaginase/glutaminase domain is found at 92 to 423; sequence SEVKIISTGG…DKIRSLMLTN (332 aa). Catalysis depends on residues T102, T178, D179, and K257.

It belongs to the asparaginase 1 family. GatD subfamily. As to quaternary structure, heterodimer of GatD and GatE.

It carries out the reaction L-glutamyl-tRNA(Gln) + L-glutamine + ATP + H2O = L-glutaminyl-tRNA(Gln) + L-glutamate + ADP + phosphate + H(+). Allows the formation of correctly charged Gln-tRNA(Gln) through the transamidation of misacylated Glu-tRNA(Gln) in organisms which lack glutaminyl-tRNA synthetase. The reaction takes place in the presence of glutamine and ATP through an activated gamma-phospho-Glu-tRNA(Gln). The GatDE system is specific for glutamate and does not act on aspartate. The protein is Glutamyl-tRNA(Gln) amidotransferase subunit D of Sulfurisphaera tokodaii (strain DSM 16993 / JCM 10545 / NBRC 100140 / 7) (Sulfolobus tokodaii).